A 347-amino-acid polypeptide reads, in one-letter code: Very-long-chain 3-oxoacyl-CoA reductase (347 aa).

Residues 22-42 traverse the membrane as a helical segment; it reads LLWSIFGFGVLKATTLILRIM. Residues Val68, Asp122, Asn149, Tyr223, Lys227, Val256, and Ser258 each coordinate NADP(+). Tyr223 serves as the catalytic Proton donor. The active-site Lowers pKa of active site Tyr is the Lys227.

It belongs to the short-chain dehydrogenases/reductases (SDR) family.

It is found in the endoplasmic reticulum membrane. The enzyme catalyses a very-long-chain (3R)-3-hydroxyacyl-CoA + NADP(+) = a very-long-chain 3-oxoacyl-CoA + NADPH + H(+). The protein operates within lipid metabolism; fatty acid biosynthesis. In terms of biological role, component of the microsomal membrane bound fatty acid elongation system, which produces the 26-carbon very long-chain fatty acids (VLCFA) from palmitate. Catalyzes the reduction of the 3-ketoacyl-CoA intermediate that is formed in each cycle of fatty acid elongation. VLCFAs serve as precursors for ceramide and sphingolipids. This chain is Very-long-chain 3-oxoacyl-CoA reductase, found in Vanderwaltozyma polyspora (strain ATCC 22028 / DSM 70294 / BCRC 21397 / CBS 2163 / NBRC 10782 / NRRL Y-8283 / UCD 57-17) (Kluyveromyces polysporus).